Here is a 250-residue protein sequence, read N- to C-terminus: 7-carboxy-7-deazaguanine synthase (250 aa).

Residues 15–17 and Arg30 contribute to the substrate site; that span reads VQG. A Radical SAM core domain is found at 21–250; sequence LIGLRQVFIR…PQTHRFMGQL (230 aa). [4Fe-4S] cluster is bound by residues Cys34, Cys38, and Cys41. Thr43 provides a ligand contact to Mg(2+). Thr96 is a binding site for substrate. Position 98 (Gly98) interacts with S-adenosyl-L-methionine.

This sequence belongs to the radical SAM superfamily. 7-carboxy-7-deazaguanine synthase family. Homodimer. [4Fe-4S] cluster is required as a cofactor. Requires S-adenosyl-L-methionine as cofactor. The cofactor is Mg(2+).

It carries out the reaction 6-carboxy-5,6,7,8-tetrahydropterin + H(+) = 7-carboxy-7-deazaguanine + NH4(+). The protein operates within purine metabolism; 7-cyano-7-deazaguanine biosynthesis. Catalyzes the complex heterocyclic radical-mediated conversion of 6-carboxy-5,6,7,8-tetrahydropterin (CPH4) to 7-carboxy-7-deazaguanine (CDG), a step common to the biosynthetic pathways of all 7-deazapurine-containing compounds. The chain is 7-carboxy-7-deazaguanine synthase from Geobacter sulfurreducens (strain ATCC 51573 / DSM 12127 / PCA).